Here is a 372-residue protein sequence, read N- to C-terminus: N-methyl-L-tryptophan oxidase (372 aa).

Position 4–34 (4–34) interacts with FAD; that stretch reads DLIIIGSGSVGAAAGYYATRAGLNVLMTDAH. At cysteine 308 the chain carries S-8alpha-FAD cysteine.

It belongs to the MSOX/MTOX family. MTOX subfamily. In terms of assembly, monomer. FAD serves as cofactor.

The catalysed reaction is N(alpha)-methyl-L-tryptophan + O2 + H2O = L-tryptophan + formaldehyde + H2O2. In terms of biological role, catalyzes the oxidative demethylation of N-methyl-L-tryptophan. This is N-methyl-L-tryptophan oxidase from Shigella dysenteriae serotype 1 (strain Sd197).